A 623-amino-acid polypeptide reads, in one-letter code: EIN3-binding F-box protein 2 (623 aa).

An F-box domain is found at 52-106 (QTSIDVLPEECLFEILRRLPSGQERSACACVSKHWLNLLSSISRSEVNESSVQDV). 18 LRR repeats span residues 119–147 (GKKA…QIRG), 151–176 (ESKV…SLWN), 177–202 (LPAV…DLSR), 203–228 (CPGI…TIDS), 229–254 (CSGV…SIRS), 255–281 (CPRI…KLQM), 307–334 (LQGV…SVMS), 335–360 (CRGM…SLNK), 361–386 (CLLV…KLEE), 387–413 (CHRI…SLAN), 414–441 (CLGI…SIRC), 442–467 (CPGF…ELCG), 468–494 (LNGV…NLSE), 495–521 (CINV…NLDG), 522–547 (CKNI…DISN), 548–574 (TLVS…SIGG), 575–600 (CSSI…NIQR), and 601–623 (CGRI…DILY).

In terms of assembly, part of a SCF (SKP1-cullin-F-box) protein ligase complex. Interacts with CUL1, SKP1A/ASK1, SKP1B/ASK2, EIN3, and EIL1. In terms of tissue distribution, ubiquitous.

Its subcellular location is the nucleus. It functions in the pathway protein modification; protein ubiquitination. Functionally, component of SCF(EBF1) E3 ubiquitin ligase complexes, which may mediate the ubiquitination and subsequent proteasomal degradation of target proteins (probably including EIN3 and EIL1). Regulator of the ethylene signaling cascade by modulating the stability of EIN3 and EIL1 proteins. This chain is EIN3-binding F-box protein 2 (EBF2), found in Arabidopsis thaliana (Mouse-ear cress).